The sequence spans 332 residues: Ketol-acid reductoisomerase (NADP(+)) (332 aa).

The region spanning 3-183 (TEIFYDADAD…GGARAGVIKT (181 aa)) is the KARI N-terminal Rossmann domain. Residues 26 to 29 (YGSQ), Ser52, Ser54, and 84 to 87 (DTKQ) contribute to the NADP(+) site. His109 is a catalytic residue. Gly135 contributes to the NADP(+) binding site. The region spanning 184 to 329 (TFTEETETDL…KKLRSLMSWT (146 aa)) is the KARI C-terminal knotted domain. Residues Asp192, Glu196, Glu228, and Glu232 each coordinate Mg(2+). Ser253 lines the substrate pocket.

This sequence belongs to the ketol-acid reductoisomerase family. Mg(2+) serves as cofactor.

It catalyses the reaction (2R)-2,3-dihydroxy-3-methylbutanoate + NADP(+) = (2S)-2-acetolactate + NADPH + H(+). It carries out the reaction (2R,3R)-2,3-dihydroxy-3-methylpentanoate + NADP(+) = (S)-2-ethyl-2-hydroxy-3-oxobutanoate + NADPH + H(+). It functions in the pathway amino-acid biosynthesis; L-isoleucine biosynthesis; L-isoleucine from 2-oxobutanoate: step 2/4. It participates in amino-acid biosynthesis; L-valine biosynthesis; L-valine from pyruvate: step 2/4. Involved in the biosynthesis of branched-chain amino acids (BCAA). Catalyzes an alkyl-migration followed by a ketol-acid reduction of (S)-2-acetolactate (S2AL) to yield (R)-2,3-dihydroxy-isovalerate. In the isomerase reaction, S2AL is rearranged via a Mg-dependent methyl migration to produce 3-hydroxy-3-methyl-2-ketobutyrate (HMKB). In the reductase reaction, this 2-ketoacid undergoes a metal-dependent reduction by NADPH to yield (R)-2,3-dihydroxy-isovalerate. This is Ketol-acid reductoisomerase (NADP(+)) from Saccharopolyspora erythraea (strain ATCC 11635 / DSM 40517 / JCM 4748 / NBRC 13426 / NCIMB 8594 / NRRL 2338).